The following is a 425-amino-acid chain: Monoacylglycerol lipase ABHD2 (425 aa).

At 1–9 the chain is on the cytoplasmic side; it reads MNAMMETSE. Residues 10 to 30 form a helical; Signal-anchor for type II membrane protein membrane-spanning segment; the sequence is LPAVFDGVKLAAVAAVLYVIV. The Extracellular portion of the chain corresponds to 31-425; the sequence is RCLNLKSPTA…DTELVEADLE (395 aa). Residues 128 to 382 enclose the AB hydrolase-1 domain; the sequence is MVICPGIANH…HGGHLGFFEG (255 aa). A glycan (N-linked (GlcNAc...) asparagine) is linked at asparagine 136. Serine 207 acts as the Nucleophile in catalysis. Active-site charge relay system residues include aspartate 345 and histidine 376. Residue asparagine 410 is glycosylated (N-linked (GlcNAc...) asparagine).

The protein belongs to the AB hydrolase superfamily. AB hydrolase 4 family.

It localises to the cell membrane. The enzyme catalyses Hydrolyzes glycerol monoesters of long-chain fatty acids.. It catalyses the reaction an acetyl ester + H2O = an aliphatic alcohol + acetate + H(+). The catalysed reaction is a triacylglycerol + H2O = a diacylglycerol + a fatty acid + H(+). It carries out the reaction 2-(5Z,8Z,11Z,14Z-eicosatetraenoyl)-glycerol + H2O = glycerol + (5Z,8Z,11Z,14Z)-eicosatetraenoate + H(+). The enzyme catalyses a butanoate ester + H2O = an aliphatic alcohol + butanoate + H(+). It catalyses the reaction hexadecanoate ester + H2O = an aliphatic alcohol + hexadecanoate + H(+). Its activity is regulated as follows. Acylglycerol lipase activity is activated upon binding to progesterone. Functionally, progesterone-dependent acylglycerol lipase that catalyzes hydrolysis of endocannabinoid arachidonoylglycerol (AG) from cell membrane. Acts as a progesterone receptor: progesterone-binding activates the acylglycerol lipase activity, mediating degradation of 1-arachidonoylglycerol (1AG) and 2-arachidonoylglycerol (2AG) to glycerol and arachidonic acid (AA). Also displays an ester hydrolase activity against acetyl ester, butanoate ester and hexadecanoate ester. Plays a key role in sperm capacitation in response to progesterone by mediating degradation of 2AG, an inhibitor of the sperm calcium channel CatSper, leading to calcium influx via CatSper and sperm activation. May also play a role in smooth muscle cells migration. In Bos taurus (Bovine), this protein is Monoacylglycerol lipase ABHD2 (ABHD2).